Consider the following 160-residue polypeptide: Protein-export protein SecB (160 aa).

The protein belongs to the SecB family. Homotetramer, a dimer of dimers. One homotetramer interacts with 1 SecA dimer.

The protein localises to the cytoplasm. One of the proteins required for the normal export of preproteins out of the cell cytoplasm. It is a molecular chaperone that binds to a subset of precursor proteins, maintaining them in a translocation-competent state. It also specifically binds to its receptor SecA. The protein is Protein-export protein SecB of Agrobacterium fabrum (strain C58 / ATCC 33970) (Agrobacterium tumefaciens (strain C58)).